The following is a 509-amino-acid chain: Probable Xaa-Pro aminopeptidase MAC_04092 (509 aa).

Aspartate 273, aspartate 284, glutamate 437, and glutamate 478 together coordinate Mn(2+).

This sequence belongs to the peptidase M24B family. Requires Mn(2+) as cofactor.

It carries out the reaction Release of any N-terminal amino acid, including proline, that is linked to proline, even from a dipeptide or tripeptide.. Its function is as follows. Catalyzes the removal of a penultimate prolyl residue from the N-termini of peptides. This is Probable Xaa-Pro aminopeptidase MAC_04092 from Metarhizium acridum (strain CQMa 102).